The primary structure comprises 235 residues: tRNA pseudouridine synthase B (235 aa).

Aspartate 45 functions as the Nucleophile in the catalytic mechanism.

It belongs to the pseudouridine synthase TruB family. Type 1 subfamily.

The enzyme catalyses uridine(55) in tRNA = pseudouridine(55) in tRNA. In terms of biological role, responsible for synthesis of pseudouridine from uracil-55 in the psi GC loop of transfer RNAs. The protein is tRNA pseudouridine synthase B of Chlamydia felis (strain Fe/C-56) (Chlamydophila felis).